Here is a 120-residue protein sequence, read N- to C-terminus: Large ribosomal subunit protein bL12 (120 aa).

This sequence belongs to the bacterial ribosomal protein bL12 family. Homodimer. Part of the ribosomal stalk of the 50S ribosomal subunit. Forms a multimeric L10(L12)X complex, where L10 forms an elongated spine to which 2 to 4 L12 dimers bind in a sequential fashion. Binds GTP-bound translation factors.

Its function is as follows. Forms part of the ribosomal stalk which helps the ribosome interact with GTP-bound translation factors. Is thus essential for accurate translation. The chain is Large ribosomal subunit protein bL12 from Lactobacillus acidophilus (strain ATCC 700396 / NCK56 / N2 / NCFM).